The sequence spans 505 residues: Deoxyguanosinetriphosphate triphosphohydrolase (505 aa).

An HD domain is found at 66–273 (RLTHSMEVQQ…MEAADDISYC (208 aa)).

This sequence belongs to the dGTPase family. Type 1 subfamily. In terms of assembly, homotetramer. Mg(2+) serves as cofactor.

It carries out the reaction dGTP + H2O = 2'-deoxyguanosine + triphosphate + H(+). Its function is as follows. dGTPase preferentially hydrolyzes dGTP over the other canonical NTPs. The protein is Deoxyguanosinetriphosphate triphosphohydrolase of Salmonella arizonae (strain ATCC BAA-731 / CDC346-86 / RSK2980).